The chain runs to 45 residues: Peroxidase 3 (45 aa).

Belongs to the peroxidase family. Classical plant (class III) peroxidase subfamily. Requires heme b as cofactor. It depends on Ca(2+) as a cofactor.

Its subcellular location is the secreted. The catalysed reaction is 2 a phenolic donor + H2O2 = 2 a phenolic radical donor + 2 H2O. In terms of biological role, removal of H(2)O(2), oxidation of toxic reductants, biosynthesis and degradation of lignin, suberization, auxin catabolism, response to environmental stresses such as wounding, pathogen attack and oxidative stress. These functions might be dependent on each isozyme/isoform in each plant tissue. The chain is Peroxidase 3 from Capsicum annuum (Capsicum pepper).